The chain runs to 102 residues: Guanyl-specific ribonuclease Pc (102 aa).

Cystine bridges form between cysteine 2–cysteine 10 and cysteine 6–cysteine 101. Histidine 38 is an active-site residue. Glutamate 56 acts as the Proton acceptor in catalysis. The active-site Proton donor is the histidine 90.

Belongs to the ribonuclease N1/T1 family.

The enzyme catalyses [RNA] containing guanosine + H2O = an [RNA fragment]-3'-guanosine-3'-phosphate + a 5'-hydroxy-ribonucleotide-3'-[RNA fragment].. The sequence is that of Guanyl-specific ribonuclease Pc from Penicillium chrysogenum (Penicillium notatum).